We begin with the raw amino-acid sequence, 161 residues long: Regulator of ribonuclease activity A (161 aa).

The protein belongs to the RraA family. As to quaternary structure, homotrimer. Binds to both RNA-binding sites in the C-terminal region of Rne and to RhlB.

The protein localises to the cytoplasm. In terms of biological role, globally modulates RNA abundance by binding to RNase E (Rne) and regulating its endonucleolytic activity. Can modulate Rne action in a substrate-dependent manner by altering the composition of the degradosome. Modulates RNA-binding and helicase activities of the degradosome. The protein is Regulator of ribonuclease activity A of Enterobacter sp. (strain 638).